The following is a 535-amino-acid chain: Sodium/hydrogen exchanger 1 (535 aa).

At 1-21 (MGMEVAAARLGALYTTSDYAS) the chain is on the cytoplasmic side. Residues 22-42 (VVSINLFVALLCACIVLGHLL) form a helical membrane-spanning segment. The Vacuolar segment spans residues 43-46 (EENR). Residues 47-67 (WVNESITALIIGLCTGVVILL) traverse the membrane as a helical segment. Over 68–75 (MTKGKSSH) the chain is Cytoplasmic. Residues 76 to 96 (LFVFSEDLFFIYLLPPIIFNA) traverse the membrane as a helical segment. Over 97-114 (GFQVKKKQFFRNFMTITL) the chain is Vacuolar. A helical transmembrane segment spans residues 115–135 (FGAVGTMISFFTISIAAIAIF). The Cytoplasmic portion of the chain corresponds to 136-137 (SR). The chain crosses the membrane as a helical span at residues 138–158 (MNIGTLDVGDFLAIGAIFSAT). Residues 159–173 (DSVCTLQVLNQDETP) lie on the Vacuolar side of the membrane. Residues 174–194 (FLYSLVFGEGVVNDATSIVLF) form a helical membrane-spanning segment. Residues 195 to 218 (NALQNFDLVHIDAAVVLKFLGNFF) lie on the Cytoplasmic side of the membrane. A helical transmembrane segment spans residues 219–239 (YLFLSSTFLGVFAGLLSAYII). Residues 240–264 (KKLYIGRHSTDREVALMMLMAYLSY) lie on the Vacuolar side of the membrane. The chain crosses the membrane as a helical span at residues 265–285 (MLAELLDLSGILTVFFCGIVM). Residues 286 to 304 (SHYTWHNVTESSRVTTKHA) are Cytoplasmic-facing. The chain crosses the membrane as a helical span at residues 305-325 (FATLSFIAETFLFLYVGMDAL). The Vacuolar portion of the chain corresponds to 326 to 344 (DIEKWEFASDRPGKSIGIS). A helical membrane pass occupies residues 345–365 (SILLGLVLIGRAAFVFPLSFL). Over 366 to 381 (SNLTKKAPNEKITWRQ) the chain is Cytoplasmic. A helical membrane pass occupies residues 382 to 402 (QVVIWWAGLMRGAVSIALAYN). Residues 403 to 415 (KFTRSGHTQLHGN) lie on the Vacuolar side of the membrane. The helical transmembrane segment at 416–436 (AIMITSTITVVLFSTMVFGMM) threads the bilayer. Residues 437-535 (TKPLIRLLLP…SPTEQSHGGR (99 aa)) are Cytoplasmic-facing. The interval 452–478 (VTSEPSSPKSLHSPLLTSMQGSDLEST) is disordered. Over residues 454–469 (SEPSSPKSLHSPLLTS) the composition is skewed to low complexity.

The protein belongs to the monovalent cation:proton antiporter 1 (CPA1) transporter (TC 2.A.36) family.

Its subcellular location is the vacuole membrane. It catalyses the reaction Na(+)(in) + H(+)(out) = Na(+)(out) + H(+)(in). It carries out the reaction K(+)(in) + H(+)(out) = K(+)(out) + H(+)(in). In terms of biological role, vacuolar antiporter that acts in low affinity electroneutral exchange of protons H(+) for cations such as Na(+) or K(+) across membranes. Plays important roles in the transport of Na(+) and K(+) accumulated in the cytoplasm into vacuoles, and is involved in salt stress tolerance. The polypeptide is Sodium/hydrogen exchanger 1 (Oryza sativa subsp. japonica (Rice)).